The sequence spans 250 residues: Ubiquinone/menaquinone biosynthesis C-methyltransferase UbiE (250 aa).

S-adenosyl-L-methionine contacts are provided by residues threonine 73, aspartate 94, 122–123 (NA), and serine 139.

Belongs to the class I-like SAM-binding methyltransferase superfamily. MenG/UbiE family.

The catalysed reaction is a 2-demethylmenaquinol + S-adenosyl-L-methionine = a menaquinol + S-adenosyl-L-homocysteine + H(+). It carries out the reaction a 2-methoxy-6-(all-trans-polyprenyl)benzene-1,4-diol + S-adenosyl-L-methionine = a 5-methoxy-2-methyl-3-(all-trans-polyprenyl)benzene-1,4-diol + S-adenosyl-L-homocysteine + H(+). Its pathway is quinol/quinone metabolism; menaquinone biosynthesis; menaquinol from 1,4-dihydroxy-2-naphthoate: step 2/2. The protein operates within cofactor biosynthesis; ubiquinone biosynthesis. Its function is as follows. Methyltransferase required for the conversion of demethylmenaquinol (DMKH2) to menaquinol (MKH2) and the conversion of 2-polyprenyl-6-methoxy-1,4-benzoquinol (DDMQH2) to 2-polyprenyl-3-methyl-6-methoxy-1,4-benzoquinol (DMQH2). In Francisella tularensis subsp. novicida (strain U112), this protein is Ubiquinone/menaquinone biosynthesis C-methyltransferase UbiE.